A 369-amino-acid chain; its full sequence is Glutamate 5-kinase (369 aa).

Position 10 (Lys10) interacts with ATP. Substrate contacts are provided by Ser50, Asp137, and Asn149. ATP is bound by residues 169 to 170 (TD) and 210 to 216 (TGGMVTK). The 74-residue stretch at 276-349 (EGSIFIDEGA…GKHSEEMLAT (74 aa)) folds into the PUA domain.

The protein belongs to the glutamate 5-kinase family.

It localises to the cytoplasm. It carries out the reaction L-glutamate + ATP = L-glutamyl 5-phosphate + ADP. The protein operates within amino-acid biosynthesis; L-proline biosynthesis; L-glutamate 5-semialdehyde from L-glutamate: step 1/2. In terms of biological role, catalyzes the transfer of a phosphate group to glutamate to form L-glutamate 5-phosphate. The protein is Glutamate 5-kinase of Desulfitobacterium hafniense (strain Y51).